A 592-amino-acid chain; its full sequence is Ferric-chelate reductase 1 (592 aa).

A helical membrane pass occupies residues 2–22; that stretch reads AVSGFTLGTCILLLHISYVAN. The 167-residue stretch at 13–179 folds into the Reelin domain; the sequence is LLLHISYVAN…FTTPKATVVP (167 aa). Residues asparagine 138, asparagine 308, and asparagine 321 are each glycosylated (N-linked (GlcNAc...) asparagine). The region spanning 216–331 is the DOMON domain; that stretch reads EASCVFLSFT…TSYYIFLADG (116 aa). The Cytochrome b561 domain occupies 335–534; that stretch reads DGRIYKHSQQ…VGTEVVLEVH (200 aa). A helical membrane pass occupies residues 372–392; it reads VHGALMFVAWMTTVSIGVLVA. Positions 373 and 414 each coordinate heme b. A run of 2 helical transmembrane segments spans residues 415–435 and 446–466; these read RMLMFTTTVLTCIAFVMPFIY and HPYLGCIVMTLAVLQPLLAVF. Residues histidine 446 and histidine 482 each coordinate heme b. 3 consecutive transmembrane segments (helical) span residues 491–511, 515–535, and 569–589; these read IIAVAAMFLGMDLPGLNLPDS, YAMTGFVAWHVGTEVVLEVHA, and AVLAIYVCGNVTFLIIFLSAI.

Belongs to the FRRS1 family. Heme b is required as a cofactor.

Its subcellular location is the membrane. Its function is as follows. Ferric-chelate reductases reduce Fe(3+) to Fe(2+) before its transport from the endosome to the cytoplasm. The protein is Ferric-chelate reductase 1 (FRRS1) of Homo sapiens (Human).